The primary structure comprises 490 residues: Betaine aldehyde dehydrogenase (490 aa).

Residues Thr26, Ile27, and Asp93 each coordinate K(+). Residue 150-152 coordinates NAD(+); it reads GAW. The active-site Charge relay system is Lys162. 176 to 179 serves as a coordination point for NAD(+); it reads KPSE. Val180 is a K(+) binding site. 230-233 serves as a coordination point for NAD(+); that stretch reads GVAS. Leu246 provides a ligand contact to K(+). The active-site Proton acceptor is the Glu252. NAD(+)-binding residues include Gly254, Cys286, and Glu387. The Nucleophile role is filled by Cys286. A Cysteine sulfenic acid (-SOH) modification is found at Cys286. K(+) contacts are provided by Lys457 and Gly460. Glu464 functions as the Charge relay system in the catalytic mechanism.

Belongs to the aldehyde dehydrogenase family. Dimer of dimers. K(+) is required as a cofactor.

It catalyses the reaction betaine aldehyde + NAD(+) + H2O = glycine betaine + NADH + 2 H(+). It functions in the pathway amine and polyamine biosynthesis; betaine biosynthesis via choline pathway; betaine from betaine aldehyde: step 1/1. Involved in the biosynthesis of the osmoprotectant glycine betaine. Catalyzes the irreversible oxidation of betaine aldehyde to the corresponding acid. This chain is Betaine aldehyde dehydrogenase, found in Escherichia coli (strain ATCC 8739 / DSM 1576 / NBRC 3972 / NCIMB 8545 / WDCM 00012 / Crooks).